We begin with the raw amino-acid sequence, 503 residues long: Probable cytosol aminopeptidase (503 aa).

Mn(2+) is bound by residues Lys-274 and Asp-279. Residue Lys-286 is part of the active site. Positions 297, 356, and 358 each coordinate Mn(2+). The active site involves Arg-360.

The protein belongs to the peptidase M17 family. Requires Mn(2+) as cofactor.

The protein resides in the cytoplasm. It catalyses the reaction Release of an N-terminal amino acid, Xaa-|-Yaa-, in which Xaa is preferably Leu, but may be other amino acids including Pro although not Arg or Lys, and Yaa may be Pro. Amino acid amides and methyl esters are also readily hydrolyzed, but rates on arylamides are exceedingly low.. The catalysed reaction is Release of an N-terminal amino acid, preferentially leucine, but not glutamic or aspartic acids.. Presumably involved in the processing and regular turnover of intracellular proteins. Catalyzes the removal of unsubstituted N-terminal amino acids from various peptides. The polypeptide is Probable cytosol aminopeptidase (Burkholderia pseudomallei (strain 1710b)).